The sequence spans 506 residues: Maturase K (506 aa).

This sequence belongs to the intron maturase 2 family. MatK subfamily.

The protein localises to the plastid. Its subcellular location is the chloroplast. Its function is as follows. Usually encoded in the trnK tRNA gene intron. Probably assists in splicing its own and other chloroplast group II introns. This Phyllodoce caerulea (Blue mountain heath) protein is Maturase K.